The sequence spans 146 residues: Deoxyuridine 5'-triphosphate nucleotidohydrolase (146 aa).

Substrate is bound by residues 66 to 68, Asn79, 83 to 85, and Lys93; these read RSG and TVD.

This sequence belongs to the dUTPase family. The cofactor is Mg(2+).

The catalysed reaction is dUTP + H2O = dUMP + diphosphate + H(+). It participates in pyrimidine metabolism; dUMP biosynthesis; dUMP from dCTP (dUTP route): step 2/2. This enzyme is involved in nucleotide metabolism: it produces dUMP, the immediate precursor of thymidine nucleotides and it decreases the intracellular concentration of dUTP so that uracil cannot be incorporated into DNA. This chain is Deoxyuridine 5'-triphosphate nucleotidohydrolase, found in Fusobacterium nucleatum subsp. nucleatum (strain ATCC 25586 / DSM 15643 / BCRC 10681 / CIP 101130 / JCM 8532 / KCTC 2640 / LMG 13131 / VPI 4355).